The primary structure comprises 698 residues: DNA ligase (698 aa).

NAD(+)-binding positions include 40 to 44, 89 to 90, and E123; these read DDVYD and SL. The active-site N6-AMP-lysine intermediate is K125. NAD(+) contacts are provided by R146, E184, K300, and K324. C417, C420, C435, and C441 together coordinate Zn(2+). The 81-residue stretch at 618–698 folds into the BRCT domain; that stretch reads SSASPVAGKA…EWLALTGAAD (81 aa).

This sequence belongs to the NAD-dependent DNA ligase family. LigA subfamily. The cofactor is Mg(2+). It depends on Mn(2+) as a cofactor.

The catalysed reaction is NAD(+) + (deoxyribonucleotide)n-3'-hydroxyl + 5'-phospho-(deoxyribonucleotide)m = (deoxyribonucleotide)n+m + AMP + beta-nicotinamide D-nucleotide.. In terms of biological role, DNA ligase that catalyzes the formation of phosphodiester linkages between 5'-phosphoryl and 3'-hydroxyl groups in double-stranded DNA using NAD as a coenzyme and as the energy source for the reaction. It is essential for DNA replication and repair of damaged DNA. The sequence is that of DNA ligase from Paramagnetospirillum magneticum (strain ATCC 700264 / AMB-1) (Magnetospirillum magneticum).